Here is a 43-residue protein sequence, read N- to C-terminus: Protein PsbN (43 aa).

The helical transmembrane segment at 5 to 27 (TFITIFISCLLVSVTGYALYTAF) threads the bilayer.

Belongs to the PsbN family.

It localises to the plastid. It is found in the chloroplast thylakoid membrane. Functionally, may play a role in photosystem I and II biogenesis. This is Protein PsbN from Chara vulgaris (Common stonewort).